The following is a 99-amino-acid chain: Large ribosomal subunit protein bL28 (99 aa).

A disordered region spans residues 1 to 25 (MSRKCAVTGKGVQTGNNVSHANNKS). The segment covering 11-22 (GVQTGNNVSHAN) has biased composition (polar residues).

Belongs to the bacterial ribosomal protein bL28 family.

The polypeptide is Large ribosomal subunit protein bL28 (Rhodospirillum centenum (strain ATCC 51521 / SW)).